We begin with the raw amino-acid sequence, 406 residues long: Renin (406 aa).

The N-terminal stretch at methionine 1 to glycine 23 is a signal peptide. The propeptide at leucine 24–arginine 66 is activation peptide. An N-linked (GlcNAc...) asparagine glycan is attached at asparagine 71. One can recognise a Peptidase A1 domain in the interval tyrosine 86–alanine 403. Residue aspartate 104 is part of the active site. The cysteines at positions 117 and 124 are disulfide-linked. Residue asparagine 141 is glycosylated (N-linked (GlcNAc...) asparagine). An intrachain disulfide couples cysteine 283 to cysteine 287. Aspartate 292 is a catalytic residue. Cysteine 325 and cysteine 362 form a disulfide bridge.

The protein belongs to the peptidase A1 family. In terms of assembly, interacts with ATP6AP2.

The protein resides in the secreted. The protein localises to the membrane. The enzyme catalyses Cleavage of Leu-|-Xaa bond in angiotensinogen to generate angiotensin I.. Its activity is regulated as follows. Interaction with ATP6AP2 results in a 5-fold increased efficiency in angiotensinogen processing. In terms of biological role, renin is a highly specific endopeptidase, whose only known function is to generate angiotensin I from angiotensinogen in the plasma, initiating a cascade of reactions that produce an elevation of blood pressure and increased sodium retention by the kidney. This chain is Renin (REN), found in Macaca mulatta (Rhesus macaque).